We begin with the raw amino-acid sequence, 448 residues long: Phosphohexose mutases (448 aa).

Residue Ser97 is the Phosphoserine intermediate of the active site. Mg(2+) is bound by residues Ser97, Asp237, Asp239, and Asp241.

Belongs to the phosphohexose mutase family. Mg(2+) is required as a cofactor.

The catalysed reaction is alpha-D-glucose 1-phosphate = alpha-D-glucose 6-phosphate. The enzyme catalyses alpha-D-mannose 1-phosphate = D-mannose 6-phosphate. It participates in nucleotide-sugar biosynthesis; GDP-alpha-D-mannose biosynthesis; alpha-D-mannose 1-phosphate from D-fructose 6-phosphate: step 2/2. Involved in xanthan production. This chain is Phosphohexose mutases (xanA), found in Xanthomonas campestris pv. campestris (strain B100).